The chain runs to 242 residues: Uridylate kinase (242 aa).

12–15 (KLSG) serves as a coordination point for ATP. An involved in allosteric activation by GTP region spans residues 20–25 (GEKGYG). G55 is a UMP binding site. ATP is bound by residues G56 and R60. UMP-binding positions include D75 and 136–143 (TGNPYFST). ATP is bound by residues Y169 and D172.

Belongs to the UMP kinase family. Homohexamer.

The protein localises to the cytoplasm. The enzyme catalyses UMP + ATP = UDP + ADP. Its pathway is pyrimidine metabolism; CTP biosynthesis via de novo pathway; UDP from UMP (UMPK route): step 1/1. With respect to regulation, allosterically activated by GTP. Inhibited by UTP. In terms of biological role, catalyzes the reversible phosphorylation of UMP to UDP. The protein is Uridylate kinase of Carboxydothermus hydrogenoformans (strain ATCC BAA-161 / DSM 6008 / Z-2901).